Consider the following 509-residue polypeptide: Cytochrome P450 monooxygenase cpaH (509 aa).

An N-linked (GlcNAc...) asparagine glycan is attached at Asn-15. A helical transmembrane segment spans residues 31-51 (TTILLIGVTYCILVGIYRVTL). Asn-306 and Asn-412 each carry an N-linked (GlcNAc...) asparagine glycan. Cys-453 provides a ligand contact to heme.

It belongs to the cytochrome P450 family. Requires heme as cofactor.

It localises to the membrane. The protein operates within secondary metabolite biosynthesis. Its function is as follows. Cytochrome P450 monooxygenase; part of the gene cluster that mediates the biosynthesis of the fungal neurotoxin cyclopiazonic acid (CPA), a nanomolar inhibitor of Ca(2+)-ATPase with a unique pentacyclic indole tetramic acid scaffold. The hybrid two module polyketide synthase-nonribosomal peptide synthetase (PKS-NRPS) cpaS incorporates acetyl-CoA, malonyl-CoA, and tryptophan (Trp) and utilizes a C-terminal redox-incompetent reductase domain to make and release the tryptophan tetramic acid, cyclo-acetoacetyl-L-tryptophan (c-AATrp), as the first intermediate in the pathway. CpaS catalyzes a Dieckmann-type cyclization on the N-acetoacetyl-Trp intermediate bound in thioester linkage to the phosphopantetheinyl arm of the T domain to form and release c-AATrp. CpaD then regiospecifically dimethylallylates c-AATrp to form beta-cyclopiazonic acid. CpaD discriminates against free Trp but accepts tryptophan-containing thiohydantoins, diketopiperazines, and linear peptides as substrates for C4-prenylation and also acts as a regiospecific O-dimethylallyltransferase (DMAT) on a tyrosine-derived tetramic acid. The beta-cyclopiazonate dehydrogenase cpaO then carries out the dehydrogenation of beta-CPA to yield an unstable enimine product, which is captured by intramolecular cyclization to create the pentacyclic fused scaffold of alpha-cyclopiazonate. Finally, the cytochrome P450 monooxygenase cpaH mediates the conversion of CPA into the less toxic 2-oxocyclopiazonic acid, the end product of the CPA pathway in A.oryza. The protein is Cytochrome P450 monooxygenase cpaH of Aspergillus oryzae (Yellow koji mold).